A 369-amino-acid chain; its full sequence is Sesquiterpene cyclase hepA (369 aa).

Mg(2+)-binding residues include aspartate 100, asparagine 248, serine 252, and aspartate 256. The short motif at 100-104 (DDEID) is the DDXXD motif element. The (N,D)D(L,I,V)X(S,T)XXXE motif signature appears at 255 to 262 (NDLLSLRK).

Belongs to the terpene synthase family. Mg(2+) is required as a cofactor.

Functionally, sesquiterpene cyclase; part of the gene cluster that mediates the biosynthesis of heptelidic acid (HA), a sesquiterpene lactone that acts as an inhibitor of glyceraldehyde-3-phosphatedehydrogenase (GAPDH) and a growth inhibitor of the salt-tolerant lactic acid bacteria in soy sauce brewing. In Aspergillus oryzae (strain ATCC 42149 / RIB 40) (Yellow koji mold), this protein is Sesquiterpene cyclase hepA.